The primary structure comprises 879 residues: Alanine--tRNA ligase (879 aa).

Positions 564, 568, 666, and 670 each coordinate Zn(2+).

The protein belongs to the class-II aminoacyl-tRNA synthetase family. The cofactor is Zn(2+).

Its subcellular location is the cytoplasm. The enzyme catalyses tRNA(Ala) + L-alanine + ATP = L-alanyl-tRNA(Ala) + AMP + diphosphate. Functionally, catalyzes the attachment of alanine to tRNA(Ala) in a two-step reaction: alanine is first activated by ATP to form Ala-AMP and then transferred to the acceptor end of tRNA(Ala). Also edits incorrectly charged Ser-tRNA(Ala) and Gly-tRNA(Ala) via its editing domain. The polypeptide is Alanine--tRNA ligase (Crocosphaera subtropica (strain ATCC 51142 / BH68) (Cyanothece sp. (strain ATCC 51142))).